Reading from the N-terminus, the 332-residue chain is Endo-1,4-beta-xylanase (332 aa).

The first 21 residues, 1–21 (MLSSTTLLAILSALALTSVQA), serve as a signal peptide directing secretion. One can recognise a GH10 domain in the interval 26–316 (KNSLDYLANK…KSTYYVVQQA (291 aa)). Residue E120 is the Proton donor of the active site. C128 and C160 are disulfide-bonded. E214 (nucleophile) is an active-site residue. C247 and C253 are disulfide-bonded.

This sequence belongs to the glycosyl hydrolase 10 (cellulase F) family.

It localises to the secreted. It carries out the reaction Endohydrolysis of (1-&gt;4)-beta-D-xylosidic linkages in xylans.. In terms of biological role, requires at least three xylose residues for catalytic activity. Does not have activity against xylobiose. In Naganishia albida (Cryptococcus albidus), this protein is Endo-1,4-beta-xylanase.